The primary structure comprises 620 residues: Glutathione-regulated potassium-efflux system protein KefC (620 aa).

A run of 12 helical transmembrane segments spans residues 4–24, 26–46, 54–74, 90–110, 114–134, 149–169, 178–198, 218–238, 270–290, 294–314, 327–347, and 359–379; these read HTLIQALIYLGSAALIVPIAV, LGLGSVLGYLIAGCIIGPWGL, SILHFAEIGVVLMLFIIGLEL, GALQMVICGGLLGLFCMLLGL, VAELIGMTLALSSTAIAMQAM, FAVLLFQDIAAIPLVAMIPLL, MGAFALSALKVAGALVLVVLL, VFSAVALFLVFGFGLLLEEVG, GLLLGLFFIGVGMSIDFGTLL, LRIVILLLGFLIIKIAMLWLI, WFAVLLGQGSEFAFVVFGAAQ, and SLTLAVALSMAATPILLVILN. In terms of domain architecture, RCK N-terminal spans 399 to 518; sequence QPRVIIAGFG…AGVEKPERET (120 aa). Residues 597-620 form a disordered region; that stretch reads GWQGTEEGKHTGNMADEPETKPSS.

It belongs to the monovalent cation:proton antiporter 2 (CPA2) transporter (TC 2.A.37) family. KefC subfamily. As to quaternary structure, homodimer. Interacts with the regulatory subunit KefF.

Its subcellular location is the cell inner membrane. Functionally, pore-forming subunit of a potassium efflux system that confers protection against electrophiles. Catalyzes K(+)/H(+) antiport. The chain is Glutathione-regulated potassium-efflux system protein KefC from Escherichia coli O6:K15:H31 (strain 536 / UPEC).